The sequence spans 261 residues: Phosphonates import ATP-binding protein PhnC (261 aa).

One can recognise an ABC transporter domain in the interval 15–257; sequence LCLENTSAVY…LERSAIPPKR (243 aa). ATP is bound at residue 48–55; the sequence is GPSGSGKS.

The protein belongs to the ABC transporter superfamily. Phosphonates importer (TC 3.A.1.9.1) family. In terms of assembly, the complex is composed of two ATP-binding proteins (PhnC), two transmembrane proteins (PhnE) and a solute-binding protein (PhnD).

The protein localises to the cell inner membrane. It catalyses the reaction phosphonate(out) + ATP + H2O = phosphonate(in) + ADP + phosphate + H(+). In terms of biological role, part of the ABC transporter complex PhnCDE involved in phosphonates import. Responsible for energy coupling to the transport system. The sequence is that of Phosphonates import ATP-binding protein PhnC from Hyphomonas neptunium (strain ATCC 15444).